Reading from the N-terminus, the 297-residue chain is UDP-N-acetylenolpyruvoylglucosamine reductase (297 aa).

Residues 22 to 195 (RAGGTARYYA…LAGRFRLQRG (174 aa)) enclose the FAD-binding PCMH-type domain. Arg-169 is an active-site residue. The Proton donor role is filled by Ser-223. Glu-293 is a catalytic residue.

The protein belongs to the MurB family. Requires FAD as cofactor.

The protein resides in the cytoplasm. It carries out the reaction UDP-N-acetyl-alpha-D-muramate + NADP(+) = UDP-N-acetyl-3-O-(1-carboxyvinyl)-alpha-D-glucosamine + NADPH + H(+). The protein operates within cell wall biogenesis; peptidoglycan biosynthesis. Cell wall formation. This chain is UDP-N-acetylenolpyruvoylglucosamine reductase, found in Chloroflexus aurantiacus (strain ATCC 29364 / DSM 637 / Y-400-fl).